Here is a 221-residue protein sequence, read N- to C-terminus: GTP cyclohydrolase 1 (221 aa).

Residues Cys111, His114, and Cys182 each contribute to the Zn(2+) site.

The protein belongs to the GTP cyclohydrolase I family. As to quaternary structure, homomer.

The enzyme catalyses GTP + H2O = 7,8-dihydroneopterin 3'-triphosphate + formate + H(+). The protein operates within cofactor biosynthesis; 7,8-dihydroneopterin triphosphate biosynthesis; 7,8-dihydroneopterin triphosphate from GTP: step 1/1. The chain is GTP cyclohydrolase 1 from Erwinia tasmaniensis (strain DSM 17950 / CFBP 7177 / CIP 109463 / NCPPB 4357 / Et1/99).